Reading from the N-terminus, the 252-residue chain is Ribosomal RNA small subunit methyltransferase J (252 aa).

Residues 101–102, 117–118, 153–154, and Asp-171 contribute to the S-adenosyl-L-methionine site; these read RD, ER, and SS.

This sequence belongs to the methyltransferase superfamily. RsmJ family.

It is found in the cytoplasm. It catalyses the reaction guanosine(1516) in 16S rRNA + S-adenosyl-L-methionine = N(2)-methylguanosine(1516) in 16S rRNA + S-adenosyl-L-homocysteine + H(+). Functionally, specifically methylates the guanosine in position 1516 of 16S rRNA. In Citrobacter koseri (strain ATCC BAA-895 / CDC 4225-83 / SGSC4696), this protein is Ribosomal RNA small subunit methyltransferase J.